A 236-amino-acid chain; its full sequence is uncharacterized protein (236 aa).

It to E.coli YfjP and YkfA.

This is an uncharacterized protein from Escherichia coli (strain K12).